Here is a 139-residue protein sequence, read N- to C-terminus: D-ribose pyranase (139 aa).

Catalysis depends on H20, which acts as the Proton donor. Substrate is bound by residues D28, H106, and 128–130 (YAN).

It belongs to the RbsD / FucU family. RbsD subfamily. Homodecamer.

The protein resides in the cytoplasm. The enzyme catalyses beta-D-ribopyranose = beta-D-ribofuranose. It functions in the pathway carbohydrate metabolism; D-ribose degradation; D-ribose 5-phosphate from beta-D-ribopyranose: step 1/2. Its function is as follows. Catalyzes the interconversion of beta-pyran and beta-furan forms of D-ribose. The protein is D-ribose pyranase of Pectobacterium carotovorum subsp. carotovorum (strain PC1).